A 956-amino-acid polypeptide reads, in one-letter code: MTLLLLPLLLASLLASCSCNKANKHKPWIEAEYQGIVMENDNTVLLNPPLFALDKDAPLRYAGEICGFRLHGSGVPFEAVILDKATGEGRIRAKEPMDCEAQKEHTFTIQAYDCGEGPDGANTKKSHKATVHVRVNDVNEFAPVFVERLYRAAVTEGKLYDRILRVEAIDGDCSPQYSQICYYEILTPNTPFLIDNDGNIENTEKLQYSGERLYKFTVTAYDCGKKRAADDAEVEIQVKPTCKPSWQGWNKRIEYAPGAGSLALFPGIRLETCDEPLWNIQATIELQTSHVAKGCDRDNYSERALRKLCGAATGEVDLLPMPGPNANWTAGLSVHYSQDSSQIYWFNGTQAVQVPLGGPSGLGSGPQDSLSDHFTLSFWMKHGVTPNKGKKEEETIVCNTVQNEDGFSHYSLTVHGCRIAFLYWPLLESARPVKFLWKLEQVCDDEWHHYALNLEFPTVTLYTDGISFDPALIHDNGLIHPPRREPALMIGACWTEGKNKEKEKGDNSTDTTQGDPLSIQRYFHGYLAGFSVRSGRLESREVIECLYACREGLDYRDFESLGKGMKVHVNPSQSLLTLEGDDVETFNHALQHVAYMNTLRFATPGVRPLRLTTAVKCFSEESCVSIPEVEGYVVVLQPDAPQILLSGTAHFARPAVDFEGTEGVPLFPDLQITCSISHQVEAKKDESWQGTVTDTRMSDEIVHNLDGCEISLVGDDLDPERESLLLDTTSLQQRGLELTNTSAYLTIAGVESITVYEEILRQARYRLRHGAALYARKFRLSCSEMNGRYSSNEFIVEVNVLHSMNRVAHPSHVLSSQQFLHRGHQPPPEMAGHSLASSHRNSMIPSAATLIIVVCVGFLVLMVVLGLVRIHSLHRRVSGAGGPPGASSDPKDPDLFWDDSALTIIVNPMESYQNRQACVTGAVGGQQEDEDSSDSEVADSPSSDERRIIETPPHRY.

The signal sequence occupies residues 1–19; it reads MTLLLLPLLLASLLASCSC. Over 20–847 the chain is Extracellular; it reads NKANKHKPWI…SHRNSMIPSA (828 aa). 2 consecutive Cadherin domains span residues 29-145 and 146-246; these read IEAE…APVF and VERL…KPSW. N-linked (GlcNAc...) asparagine glycosylation is found at Asn299, Asn327, Asn347, Asn507, and Asn740. A helical transmembrane segment spans residues 848-868; sequence ATLIIVVCVGFLVLMVVLGLV. At 869-956 the chain is on the cytoplasmic side; that stretch reads RIHSLHRRVS…RIIETPPHRY (88 aa). The tract at residues 917–956 is disordered; that stretch reads ACVTGAVGGQQEDEDSSDSEVADSPSSDERRIIETPPHRY. Residues 927–937 show a composition bias toward acidic residues; the sequence is QEDEDSSDSEV. Basic and acidic residues predominate over residues 943–956; the sequence is SDERRIIETPPHRY.

Belongs to the calsyntenin family. Interacts (via cadherin domains) with both alpha and beta isoforms of neurexins (NRXN1, NRXN2 and NRXN3). Directly interacts with APBA2. Forms a tripartite complex with APBA2 and APP. Interacts with low affinity with KLC1. Interacts with SLC23A2/SVCT2. In terms of processing, proteolytically processed under normal cellular conditions. A primary zeta-cleavage generates a large extracellular (soluble) N-terminal domain (sAlc) and a short C-terminal transmembrane fragment (CTF1). A secondary cleavage catalyzed by gamma-secretase within the transmembrane domain releases the beta-Alc-beta chain in the extracellular milieu and produces an intracellular fragment (AlcICD). This processing is strongly suppressed in the tripartite complex formed with APBA2 and APP, which seems to prevent the association with gamma-secretase.

It is found in the postsynaptic cell membrane. The protein localises to the endoplasmic reticulum membrane. The protein resides in the golgi apparatus membrane. It localises to the cell projection. Its subcellular location is the dendrite. In terms of biological role, postsynaptic adhesion molecule that binds to presynaptic neurexins to mediate both excitatory and inhibitory synapse formation. Promotes synapse development by acting as a cell adhesion molecule at the postsynaptic membrane, which associates with both neurexin-alpha and neurexin-beta proteins at the presynaptic membrane. Regulates the balance between excitatory and inhibitory synapses by inhibiting formation of excitatory parallel-fiber synapses and promoting formation of inhibitory synapses in the same neuron. May also be involved in ascorbate (vitamin C) uptake via its interaction with SLC23A2/SVCT2. Complex formation with APBA2 and APP, stabilizes APP metabolism and enhances APBA2-mediated suppression of beta-APP40 secretion, due to the retardation of intracellular APP maturation. This Pongo abelii (Sumatran orangutan) protein is Calsyntenin-3 (CLSTN3).